The following is a 296-amino-acid chain: tRNA dimethylallyltransferase (296 aa).

Gly-9–Thr-16 serves as a coordination point for ATP. Thr-11–Thr-16 contacts substrate. Positions Asp-34 to Gln-37 are interaction with substrate tRNA.

Belongs to the IPP transferase family. Monomer. Mg(2+) is required as a cofactor.

It catalyses the reaction adenosine(37) in tRNA + dimethylallyl diphosphate = N(6)-dimethylallyladenosine(37) in tRNA + diphosphate. In terms of biological role, catalyzes the transfer of a dimethylallyl group onto the adenine at position 37 in tRNAs that read codons beginning with uridine, leading to the formation of N6-(dimethylallyl)adenosine (i(6)A). The sequence is that of tRNA dimethylallyltransferase from Chloroflexus aggregans (strain MD-66 / DSM 9485).